The sequence spans 729 residues: Kinesin-like protein KAR3 (729 aa).

A disordered region spans residues 1–48 (MESLPRTPTKGRSTQHLSTPSPKNDILAMNGHKRRNTTTPPPKHTLLK). The globular stretch occupies residues 1-109 (MESLPRTPTK…ENVNELNRTQ (109 aa)). A compositionally biased stretch (polar residues) spans 10-22 (KGRSTQHLSTPSP). A coiled-coil region spans residues 110 to 357 (AILFEKKATL…LEEYIKDTEL (248 aa)). Residues N386, R388, R392, E454, G477, S478, G479, K480, T481, F482, E554, K579, and T694 each contribute to the ATP site. Positions 386-723 (NIRVYCRIRP…LRFASKVNST (338 aa)) constitute a Kinesin motor domain.

This sequence belongs to the TRAFAC class myosin-kinesin ATPase superfamily. Kinesin family. NCD subfamily. In terms of assembly, interacts with CIK1; the interaction is direct. Interacts with VIK1; the interaction is direct.

It localises to the cytoplasm. The protein localises to the cytoskeleton. Its subcellular location is the microtubule organizing center. The protein resides in the spindle pole body. It is found in the nucleus. It localises to the chromosome. The protein localises to the spindle. It carries out the reaction ATP + H2O = ADP + phosphate + H(+). The enzyme catalyses ATP + H2O + a kinesin associated with a microtubule at position (n) = ADP + phosphate + a kinesin associated with a microtubule at position (n-1, toward the minus end).. Its function is as follows. Minus end-directed microtubule (MT) motor involved in spindle midzone assembly, poleward transport of newly captured kinetochores along the lateral side of MTs, karyogamy (nuclear fusion) during mating, and with an essential function in meiosis I. Functions together with the accessory proteins CIK1 or VIK1. Drives the poleward transport of newly captured kinetochores along the lateral side of MTs, both during S-phase and during M-phase. To contribute to spindle midzone assembly during mitotic metaphase, the nuclear KAR3-CIK1 motor cross-links anti-parallel microtubules to align them on the spindle axis; as the motor travels polewards splayed microtubules are pulled into alignment. During the karyogamy (nuclear fusion) step of mating, KAR3-CIK1 cross-links antiparallel cytoplasmic microtubules emanating from the spindle pole bodies of mating partners; the motor activity of KAR3 creates the force that pulls the nuclei together by sliding cross-linked microtubules past one another. KAR3-CIK1 promotes microtubule shortening predominantly from the microtubule plus-end. Together with cytoplasmic VIK1, may act to stabilize microtubules. Requires accessory protein VIK1 for spindle pole body localization and to allow the CIN8 and KIP1 motors to generate outwardly directed spindle forces. Essential during meiosis I. The ATPase activity is stimulated by microtubule-binding. This is Kinesin-like protein KAR3 (KAR3) from Saccharomyces cerevisiae (strain ATCC 204508 / S288c) (Baker's yeast).